Consider the following 358-residue polypeptide: tRNA-specific 2-thiouridylase MnmA (358 aa).

ATP contacts are provided by residues 8–15 and Leu-34; that span reads GLSGGVDS. Residue Cys-95 is the Nucleophile of the active site. A disulfide bond links Cys-95 and Cys-194. Gly-120 is a binding site for ATP. An interaction with tRNA region spans residues 144-146; the sequence is KDQ. The active-site Cysteine persulfide intermediate is the Cys-194. Positions 299-300 are interaction with tRNA; sequence RY.

It belongs to the MnmA/TRMU family.

The protein localises to the cytoplasm. The enzyme catalyses S-sulfanyl-L-cysteinyl-[protein] + uridine(34) in tRNA + AH2 + ATP = 2-thiouridine(34) in tRNA + L-cysteinyl-[protein] + A + AMP + diphosphate + H(+). In terms of biological role, catalyzes the 2-thiolation of uridine at the wobble position (U34) of tRNA, leading to the formation of s(2)U34. The sequence is that of tRNA-specific 2-thiouridylase MnmA from Synechocystis sp. (strain ATCC 27184 / PCC 6803 / Kazusa).